The chain runs to 513 residues: GMP synthase [glutamine-hydrolyzing] (513 aa).

In terms of domain architecture, Glutamine amidotransferase type-1 spans 9 to 198 (LILVLDFGSQ…VRRVCNCTGE (190 aa)). Residue Cys-86 is the Nucleophile of the active site. Catalysis depends on residues His-172 and Glu-174. Residues 199–388 (WTMENFIEIE…LGIPEHLVWR (190 aa)) form the GMPS ATP-PPase domain. 226 to 232 (SGGVDSS) is a binding site for ATP.

In terms of assembly, homodimer.

It catalyses the reaction XMP + L-glutamine + ATP + H2O = GMP + L-glutamate + AMP + diphosphate + 2 H(+). Its pathway is purine metabolism; GMP biosynthesis; GMP from XMP (L-Gln route): step 1/1. In terms of biological role, catalyzes the synthesis of GMP from XMP. This Staphylococcus epidermidis (strain ATCC 12228 / FDA PCI 1200) protein is GMP synthase [glutamine-hydrolyzing].